A 300-amino-acid chain; its full sequence is MEEDGSDWGGLAPEILINIISRLTIQELWTGPMFVQKSWLTVCRDPYLWSIFDLEPWFDSYPESTHLWSPEFEQKVDLMLRSVVDWSEGGLTKIRVRHCSDHALSYAADRCPNLQVLAIRSSPNVTDASMTKIAFRCRSLKELDISYCHEISHDTLVMIGRNCPNLRILKRNLMDWSSRHIGSVPTEYLDACPQDGDTEADAIGKHMINLEHLEIQFSRLSVKGLASICEGCPKLEYLDLFGCVHLSSRDITSNVSRLKWLKEVKKPDVYVPRSGDVAQTERYGHWRLYDERFDIQAMRI.

In terms of domain architecture, F-box; degenerate spans 11-52; it reads LAPEILINIISRLTIQELWTGPMFVQKSWLTVCRDPYLWSIF.

As to quaternary structure, part of a SCF (ASK-cullin-F-box) protein ligase complex. Interacts with SKP1A/ASK1 and SKP1B/ASK2.

The protein localises to the nucleus. Its pathway is protein modification; protein ubiquitination. Its function is as follows. Component of SCF(ASK-cullin-F-box) E3 ubiquitin ligase complexes, which may mediate the ubiquitination and subsequent proteasomal degradation of target proteins. This chain is F-box protein SKIP1 (SKIP1), found in Arabidopsis thaliana (Mouse-ear cress).